We begin with the raw amino-acid sequence, 365 residues long: Peptide chain release factor 2 (365 aa).

At glutamine 252 the chain carries N5-methylglutamine.

It belongs to the prokaryotic/mitochondrial release factor family. In terms of processing, methylated by PrmC. Methylation increases the termination efficiency of RF2.

The protein localises to the cytoplasm. Functionally, peptide chain release factor 2 directs the termination of translation in response to the peptide chain termination codons UGA and UAA. This is Peptide chain release factor 2 from Aeromonas salmonicida (strain A449).